A 500-amino-acid chain; its full sequence is L-arabinose isomerase (500 aa).

The Mn(2+) site is built by Glu306, Glu333, His350, and His450.

This sequence belongs to the arabinose isomerase family. As to quaternary structure, homohexamer. The cofactor is Mn(2+).

It carries out the reaction beta-L-arabinopyranose = L-ribulose. It functions in the pathway carbohydrate degradation; L-arabinose degradation via L-ribulose; D-xylulose 5-phosphate from L-arabinose (bacterial route): step 1/3. Functionally, catalyzes the conversion of L-arabinose to L-ribulose. This Salmonella choleraesuis (strain SC-B67) protein is L-arabinose isomerase.